The sequence spans 264 residues: Small ribosomal subunit protein eS1 (264 aa).

This sequence belongs to the eukaryotic ribosomal protein eS1 family. In terms of assembly, component of the small ribosomal subunit. Mature ribosomes consist of a small (40S) and a large (60S) subunit. The 40S subunit contains about 33 different proteins and 1 molecule of RNA (18S). The 60S subunit contains about 49 different proteins and 3 molecules of RNA (25S, 5.8S and 5S).

The protein resides in the cytoplasm. The polypeptide is Small ribosomal subunit protein eS1 (Babesia bovis).